A 132-amino-acid chain; its full sequence is ATP synthase epsilon chain, chloroplastic (132 aa).

Thr2 carries the N-acetylthreonine modification.

Belongs to the ATPase epsilon chain family. F-type ATPases have 2 components, CF(1) - the catalytic core - and CF(0) - the membrane proton channel. CF(1) has five subunits: alpha(3), beta(3), gamma(1), delta(1), epsilon(1). CF(0) has three main subunits: a, b and c.

It localises to the plastid. The protein localises to the chloroplast thylakoid membrane. Functionally, produces ATP from ADP in the presence of a proton gradient across the membrane. This Arabidopsis thaliana (Mouse-ear cress) protein is ATP synthase epsilon chain, chloroplastic.